A 208-amino-acid polypeptide reads, in one-letter code: N-(5'-phosphoribosyl)anthranilate isomerase (208 aa).

Belongs to the TrpF family.

The enzyme catalyses N-(5-phospho-beta-D-ribosyl)anthranilate = 1-(2-carboxyphenylamino)-1-deoxy-D-ribulose 5-phosphate. It participates in amino-acid biosynthesis; L-tryptophan biosynthesis; L-tryptophan from chorismate: step 3/5. The polypeptide is N-(5'-phosphoribosyl)anthranilate isomerase (Neisseria meningitidis serogroup A / serotype 4A (strain DSM 15465 / Z2491)).